We begin with the raw amino-acid sequence, 824 residues long: MNEPMSLFDDLPEEHDEPQEAPERRLPMVVLGEMVIMPHMTIPLQVPQGKSYRAMERAWEEDRDVLLIFVREHQLEGYKSNQPQNLPPIGVIAQLQEFAKLNDGTARVILEGQSRAQIIEAIQITPFYRVRCRPYTDPPVSGLEVEALMETVKQQVDEFVEHLGEVPQEAVQFVHRIDRPGHLADIVTWGPAFDFKDRLEVLNTLDPVERLRKVYLVLARQLELLKLRVKIQQDTKEVLDQSQREYFLREQLRIIRRELGEDEEGDDPIDELRRKIHELDAPEYVKNQALHELKRLAQQGMNNPESGVIRTYLDWILSLPWADEELPEISITEAQKVLDADHYGLEKVKERILEYLAVRKLAGDKMRSPILCFVGPPGVGKTSLGRSIARALGRKFVRTSLGGVRDEAEIRGHRRTYIGAMPGRIIQAMKNAKSKSPVYILDEVDKIGLDFRGDPTSALLEVLDPEQNNAFSDHYLEIPFDLSKVIFIATANQLDPIPLPLRDRMEIIEIGGYTEDEKLEIARGFLIPKQREFHGLTEDQIEFTEGAILKLIREYTREAGVRGLEREIASLCRKVARQVAEQTEANGELPPKFVIDEAAVVKYLGPERYTYGIAEEQDEVGVATGVAWTSAGGDILSIEVLPFKGKGQLQLTGQLGEVMKESAQTAVSYVRSRAADFGIDPNTFEETNIHIHIPEGAVPKDDPSAGITLTTALISALTGTPVRRDVAMTGEVTLRGKVLPIGGLKEKTLAAHRAGIRTFILPKENAKDISELPEKVRRELNLIPVSSMDEVLRIALSRMPTPANNQNGSHTNNRGQPSPAPAGT.

The interval 1–23 (MNEPMSLFDDLPEEHDEPQEAPE) is disordered. Positions 10–20 (DLPEEHDEPQE) are enriched in acidic residues. The Lon N-terminal domain maps to 26-222 (LPMVVLGEMV…KVYLVLARQL (197 aa)). Position 375–382 (375–382 (GPPGVGKT)) interacts with ATP. The Lon proteolytic domain maps to 617-798 (QDEVGVATGV…DEVLRIALSR (182 aa)). Catalysis depends on residues serine 704 and lysine 747. Residues 800–824 (PTPANNQNGSHTNNRGQPSPAPAGT) form a disordered region. Positions 802–816 (PANNQNGSHTNNRGQ) are enriched in polar residues.

This sequence belongs to the peptidase S16 family. In terms of assembly, homohexamer. Organized in a ring with a central cavity.

The protein resides in the cytoplasm. It carries out the reaction Hydrolysis of proteins in presence of ATP.. Its function is as follows. ATP-dependent serine protease that mediates the selective degradation of mutant and abnormal proteins as well as certain short-lived regulatory proteins. Required for cellular homeostasis and for survival from DNA damage and developmental changes induced by stress. Degrades polypeptides processively to yield small peptide fragments that are 5 to 10 amino acids long. Binds to DNA in a double-stranded, site-specific manner. This is Lon protease from Chloroflexus aggregans (strain MD-66 / DSM 9485).